The chain runs to 148 residues: Oleosin 16 kDa (148 aa).

Residues 1-21 (MADQHRGVIGGGGYGDRGGQE) form a disordered region. Ala-2 bears the N-acetylalanine mark. Residues 2–34 (ADQHRGVIGGGGYGDRGGQEQQEKQPFMMTALK) are polar. The segment covering 8–17 (VIGGGGYGDR) has biased composition (gly residues). Residues 35 to 106 (TVTAATAGGS…AALSVFSWMY (72 aa)) form a hydrophobic region. 3 helical membrane passes run 43–63 (GSML…LTVA), 66–86 (VLVI…LMAA), and 87–107 (GFVT…WMYK).

Belongs to the oleosin family.

The protein localises to the lipid droplet. It is found in the membrane. Its function is as follows. May have a structural role to stabilize the lipid body during desiccation of the seed by preventing coalescence of the oil. Probably interacts with both lipid and phospholipid moieties of lipid bodies. May also provide recognition signals for specific lipase anchorage in lipolysis during seedling growth. This Oryza sativa subsp. japonica (Rice) protein is Oleosin 16 kDa (OLE16).